We begin with the raw amino-acid sequence, 298 residues long: Tryptophan 2,3-dioxygenase (298 aa).

Substrate contacts are provided by residues 51–55 (FIIQH), Y113, and R117. H240 lines the heme pocket. T254 contacts substrate.

Belongs to the tryptophan 2,3-dioxygenase family. In terms of assembly, homotetramer. The cofactor is heme.

The catalysed reaction is L-tryptophan + O2 = N-formyl-L-kynurenine. It participates in amino-acid degradation; L-tryptophan degradation via kynurenine pathway; L-kynurenine from L-tryptophan: step 1/2. Functionally, heme-dependent dioxygenase that catalyzes the oxidative cleavage of the L-tryptophan (L-Trp) pyrrole ring and converts L-tryptophan to N-formyl-L-kynurenine. Catalyzes the oxidative cleavage of the indole moiety. This Xanthomonas campestris pv. campestris (strain 8004) protein is Tryptophan 2,3-dioxygenase.